The primary structure comprises 283 residues: Pseudokinase OPG198 (283 aa).

Met-1 and Lys-30 together coordinate ATP. One can recognise a Protein kinase domain in the interval 1–283; it reads MESFKYCFDN…DRLRRLFIQD (283 aa).

The protein belongs to the protein kinase superfamily. Ser/Thr protein kinase family. Poxviruses subfamily. In terms of assembly, interacts with B1/VPK1. Interacts with host VRK1. Interacts with host VRK2.

It is found in the host nucleus. Both catalytically active kinases B1/VPK1 and host VRK2 repress B12 inhibitory activity in a B1/VPK1 deletion mutant strain. Functionally, pseudokinase that plays a role in viral DNA replication repression by activating the antiviral protein BANF1 and inhibiting the activity of host VRK1, a cellular modulator of BANF1. The chain is Pseudokinase OPG198 (OPG198) from Homo sapiens (Human).